The following is a 243-amino-acid chain: NAD-dependent protein deacylase SIR2rp3 (243 aa).

One can recognise a Deacetylase sirtuin-type domain in the interval 1-239 (MKACRCITIL…PTWVDQVLKE (239 aa)). 12-31 (GAGISAESGISTFRDSNGLW) is a binding site for NAD(+). Residues Tyr-56 and Arg-59 each contribute to the substrate site. An NAD(+)-binding site is contributed by 95 to 98 (QNVD). His-113 (proton acceptor) is an active-site residue. Zn(2+) contacts are provided by Cys-121 and Cys-141. NAD(+) contacts are provided by residues 181-183 (GTS) and Ala-225.

The protein belongs to the sirtuin family. Class III subfamily. Requires Zn(2+) as cofactor.

The protein resides in the mitochondrion. The enzyme catalyses N(6)-malonyl-L-lysyl-[protein] + NAD(+) + H2O = 2''-O-malonyl-ADP-D-ribose + nicotinamide + L-lysyl-[protein]. It catalyses the reaction N(6)-succinyl-L-lysyl-[protein] + NAD(+) + H2O = 2''-O-succinyl-ADP-D-ribose + nicotinamide + L-lysyl-[protein]. The catalysed reaction is N(6)-glutaryl-L-lysyl-[protein] + NAD(+) + H2O = 2''-O-glutaryl-ADP-D-ribose + nicotinamide + L-lysyl-[protein]. Functionally, NAD-dependent lysine demalonylase, desuccinylase and deglutarylase that specifically removes malonyl, succinyl and glutaryl groups on target proteins. Has weak NAD-dependent protein deacetylase activity; however this activity may not be physiologically relevant in vivo. The protein is NAD-dependent protein deacylase SIR2rp3 (SIR2rp3) of Leishmania major.